The chain runs to 451 residues: PTS system galactose-specific EIIC component (451 aa).

In terms of domain architecture, PTS EIIC type-3 spans 8–427; the sequence is LNKTLMPLAS…VLNVLIYYPF (420 aa). The next 11 membrane-spanning stretches (helical) occupy residues 40–60, 69–89, 104–124, 151–171, 190–210, 239–259, 263–283, 296–316, 332–352, 356–376, and 403–423; these read LGIALLTIIGYFPVPAWVDFL, FSAVIGAVTSALAIYVTYNFA, GLLSIASLLMLMPQIITVPVV, TGSTGLIVAIIIGFIVSLVYI, VVDSLSPAIISMVIFCLMFGI, ANPWVLMGIFTFGNFLWFFGI, LIGGILNPLLLTMSYANIDAY, IVFAVGANAWGGSGNTYGLVI, LGAIPSIFNISEPLLFGLPMM, LFFIPLVFQPAILGTVALGLA, and ISGGLPFLIIFAICLVLNVLI.

It localises to the cell membrane. Its function is as follows. The phosphoenolpyruvate-dependent sugar phosphotransferase system (PTS), a major carbohydrate active transport system, catalyzes the phosphorylation of incoming sugar substrates concomitant with their translocation across the cell membrane. Involved in galactose transport with PtcA and PtcB. In Lactococcus lactis subsp. cremoris (strain MG1363), this protein is PTS system galactose-specific EIIC component.